Reading from the N-terminus, the 575-residue chain is MAEEFSNTTHESFNFTLHTTLGVTTKLVLPTPAEPILPVQTGEQAQQEEQSSGMTIFFSLLVLAICIILVHLLIRYRLHFLPESVAVVSLGILMGAVIKVIEFKKLANWKEEEMFRPNMFFLLLLPPIIFESGYSLHKGNFFQNIGSITLFAVFGTAISAFVVGGGIYFLGQADVISKLNMTDSFAFGSLISAVDPVATIAIFNALHVDPVLNMLVFGESILNDAVSIVLTNTAEGLTRKHMSDVSGWQTFSQALGYFLKMFFGSAALGTLTGLISALVLKHIDLRKTPSLEFGMMIIFAYLPYGLAEGISLSGIMAILFSGIVMSHYTHHNLSPVTQILMQQTLRTVAFLCETCVFAFLGLSIFSFPHKFEISFVIWCIVLVLFGRAVNIFPLSYLLNFFRDHKITPKMMFIMWFSGLRGAIPYALSLHLGLEPMEKRQLIGTTTIIIVLFTILLLGGSTMPLIRLVDIEDARARRRSKKDVNLSKTEKMGNAIESEHLSELTEEEYEAHYIRQQDLKGFMWLDAKYLNPFFTRRLTQEDLHHGRIQMKSLTNKWYEEVRQGPSGSEDDEQELF.

The next 11 helical transmembrane spans lie at 54–74, 78–98, 117–137, 150–170, 185–205, 255–275, 305–325, 348–368, 373–393, 411–431, and 445–465; these read MTIF…HLLI, LHFL…GAVI, PNMF…YSLH, LFAV…IYFL, FAFG…IFNA, LGYF…TGLI, GLAE…GIVM, VAFL…FSFP, ISFV…NIFP, MFIM…SLHL, and TTII…MPLI. Position 504 is a phosphothreonine (Thr-504). Ser-565 and Ser-567 each carry phosphoserine.

It belongs to the monovalent cation:proton antiporter 1 (CPA1) transporter (TC 2.A.36) family. In terms of tissue distribution, intestine and kidneys.

The protein localises to the golgi apparatus membrane. Its subcellular location is the golgi apparatus. It is found in the trans-Golgi network membrane. The protein resides in the endosome. It localises to the multivesicular body membrane. The protein localises to the apical cell membrane. Its subcellular location is the cytoplasmic vesicle. It is found in the secretory vesicle. The protein resides in the acrosome. The enzyme catalyses Na(+)(in) + H(+)(out) = Na(+)(out) + H(+)(in). Its activity is regulated as follows. Expression and activity are regulated by acid media by increasing the rate of trafficking to the apical membrane. Inhibited by HOE694 and S3226. In terms of biological role, na(+)/H(+) antiporter. Mediates the electoneutral exchange of intracellular H(+) ions for extracellular Na(+) in 1:1 stoichiometry. Acts as an Na(+)/H(+) exchanger in the trans-Golgi. Contributes to the regulation of pH regulation of Golgi apparatus, and consequently, in protein trafficking and endosomal morphology. In germ cells, plays a crucial role in acrosome biogenesis and sperm development, probably by playing a role in the fusion of the Golgi-derived vesicles that form the acrosomal cap. Can also be active at the cell surface of specialized cells. In the small intestine, at the cell membrane, plays a major physiological role in transepithelial absorption of Na(+) and regulates intracellular pH homeostasis of intestinal epithelial cells. Acts as an important regulator of mucosal integrity in the intestine and in the stomach, could mediate the pH fluctuation necessary for mucin exocytosis or assist membrane trafficking of other proteins. Plays a role in photoreceptor survival and in the maintenance of intracellular pH homeostasis in retinal pigment epithelium (RPE cells). The chain is Sodium/hydrogen exchanger 8 (Slc9a8) from Rattus norvegicus (Rat).